Here is a 719-residue protein sequence, read N- to C-terminus: Endonuclease MutS2 (719 aa).

Residue 273 to 280 (GPNTGGKT) coordinates ATP. In terms of domain architecture, Smr spans 644-719 (LDLRGYRYED…GFGVTVATLK (76 aa)).

This sequence belongs to the DNA mismatch repair MutS family. MutS2 subfamily. As to quaternary structure, homodimer. Binds to stalled ribosomes, contacting rRNA.

In terms of biological role, endonuclease that is involved in the suppression of homologous recombination and thus may have a key role in the control of bacterial genetic diversity. Its function is as follows. Acts as a ribosome collision sensor, splitting the ribosome into its 2 subunits. Detects stalled/collided 70S ribosomes which it binds and splits by an ATP-hydrolysis driven conformational change. Acts upstream of the ribosome quality control system (RQC), a ribosome-associated complex that mediates the extraction of incompletely synthesized nascent chains from stalled ribosomes and their subsequent degradation. Probably generates substrates for RQC. This Staphylococcus aureus protein is Endonuclease MutS2.